The following is a 698-amino-acid chain: tRNA (guanine(37)-N(1))-methyltransferase (698 aa).

Positions 233–254 (DSTAHDSVQRNEGKTPKGPLDG) are disordered. The span at 234 to 247 (STAHDSVQRNEGKT) shows a compositional bias: basic and acidic residues. S-adenosyl-L-methionine-binding positions include Arg394, 432–433 (DI), and 459–460 (DA). 2 disordered regions span residues 500-522 (PDQNNVDTGKRKKRESDRVGHVD) and 534-582 (KKKL…DAPR). 3 stretches are compositionally biased toward basic and acidic residues: residues 513-522 (RESDRVGHVD), 539-550 (HADTNDPLEERP), and 569-582 (TNNDSEKTKEDAPR). Residue Asn603 participates in S-adenosyl-L-methionine binding.

Belongs to the class I-like SAM-binding methyltransferase superfamily. TRM5/TYW2 family. In terms of assembly, monomer.

The protein localises to the mitochondrion matrix. It is found in the nucleus. Its subcellular location is the cytoplasm. It catalyses the reaction guanosine(37) in tRNA + S-adenosyl-L-methionine = N(1)-methylguanosine(37) in tRNA + S-adenosyl-L-homocysteine + H(+). In terms of biological role, specifically methylates the N1 position of guanosine-37 in various cytoplasmic and mitochondrial tRNAs. Methylation is not dependent on the nature of the nucleoside 5' of the target nucleoside. This is the first step in the biosynthesis of wybutosine (yW), a modified base adjacent to the anticodon of tRNAs and required for accurate decoding. This is tRNA (guanine(37)-N(1))-methyltransferase from Plasmodium knowlesi (strain H).